The chain runs to 360 residues: MRKRISAIINKLNISIMMMIVVLMIGCGQQAVEAGKDGARAATGGRSLSEVLMEVGKSAENAFYSFMALVSDTLGLRVTKDTKKNEVGGYFNSLGGKLGKASDELEEVAKKSEVEGAKDGPIAVAIRAAVDTAKTTLSTLKGHLESLKGIGDDKVVGWAENDQQGIKPADDGLNKFLNALQSIVKAATDAGVLAPKAGNTTLTVNGVDNKDGAKVLAIDKPGAAVGEKASLIVSAVSGEEILASIVASKEGDQALGAAADGTTTAMSFAKGGTKDNLSNANTPKAAAVAGGIALRSLVKDGKLASHNDNSEKAVQAAGVIAANKLLVSVEDLIKKTVKNVLEKAKEKIDKARAPKATGQQ.

The first 26 residues, 1–26 (MRKRISAIINKLNISIMMMIVVLMIG), serve as a signal peptide directing secretion. Cys27 carries the N-palmitoyl cysteine lipid modification. Cys27 is lipidated: S-diacylglycerol cysteine.

Belongs to the variable large protein (Vlp) family. Alpha subfamily.

Its subcellular location is the cell outer membrane. In terms of biological role, the Vlp and Vsp proteins are antigenically distinct proteins, only one vlp or vsp gene is transcriptionally active at any one time. Switching between these genes is a mechanism of host immune response evasion. The protein is Variable large protein 18 of Borrelia hermsii.